The following is a 203-amino-acid chain: Holliday junction branch migration complex subunit RuvA (203 aa).

Residues 1-63 (MIFSVRGEVL…EDSMTLYGFS (63 aa)) are domain I. Positions 64 to 141 (DAENRDLFLA…GPVGASGLTV (78 aa)) are domain II. Residues 141-145 (VGTAA) form a flexible linker region. Residues 146 to 203 (DGNAVRGSVVEALVGLGFAAKQAEEATDQVLDGELGKDGAVATSSALRAALSLLGKTR) form a domain III region.

It belongs to the RuvA family. Homotetramer. Forms an RuvA(8)-RuvB(12)-Holliday junction (HJ) complex. HJ DNA is sandwiched between 2 RuvA tetramers; dsDNA enters through RuvA and exits via RuvB. An RuvB hexamer assembles on each DNA strand where it exits the tetramer. Each RuvB hexamer is contacted by two RuvA subunits (via domain III) on 2 adjacent RuvB subunits; this complex drives branch migration. In the full resolvosome a probable DNA-RuvA(4)-RuvB(12)-RuvC(2) complex forms which resolves the HJ.

Its subcellular location is the cytoplasm. Functionally, the RuvA-RuvB-RuvC complex processes Holliday junction (HJ) DNA during genetic recombination and DNA repair, while the RuvA-RuvB complex plays an important role in the rescue of blocked DNA replication forks via replication fork reversal (RFR). RuvA specifically binds to HJ cruciform DNA, conferring on it an open structure. The RuvB hexamer acts as an ATP-dependent pump, pulling dsDNA into and through the RuvAB complex. HJ branch migration allows RuvC to scan DNA until it finds its consensus sequence, where it cleaves and resolves the cruciform DNA. This is Holliday junction branch migration complex subunit RuvA from Mycobacterium leprae (strain Br4923).